A 72-amino-acid polypeptide reads, in one-letter code: UPF0270 protein ESA_04379 (72 aa).

Belongs to the UPF0270 family.

The chain is UPF0270 protein ESA_04379 from Cronobacter sakazakii (strain ATCC BAA-894) (Enterobacter sakazakii).